The primary structure comprises 122 residues: Large ribosomal subunit protein uL14c (122 aa).

This sequence belongs to the universal ribosomal protein uL14 family. As to quaternary structure, part of the 50S ribosomal subunit.

The protein localises to the plastid. It localises to the chloroplast. In terms of biological role, binds to 23S rRNA. This chain is Large ribosomal subunit protein uL14c, found in Nandina domestica (Heavenly bamboo).